Reading from the N-terminus, the 758-residue chain is Solute carrier family 26 member 6 (758 aa).

At 1–117 (MGLPDGSDQG…PQGLAYALLA (117 aa)) the chain is on the cytoplasmic side. A helical membrane pass occupies residues 118-138 (GLPPMFGLYSSFYPVFIYFLF). Over 139-187 (GTSRHISVGTFAVMSVMVGSVTESLTADKAFVQGLNATADDARVQVAYT) the chain is Extracellular. Asn-174 carries an N-linked (GlcNAc) asparagine glycan. A helical membrane pass occupies residues 188 to 208 (LSFLVGLFQVGLGLVHFGFVV). The Cytoplasmic segment spans residues 209–263 (TYLSEPLVRSYTTAASVQVLVSQLKYVFGIKLSSHSGPLSVIYTVLEVCAQLPET). Residues 264–284 (VPGTVVTAIVAGVALVLVKLL) traverse the membrane as a helical segment. The Extracellular portion of the chain corresponds to 285–292 (NEKLHRRL). The chain crosses the membrane as a helical span at residues 293-313 (PLPIPGELLTLIGATGISYGV). At 314–340 (KLNDRFKVDVVGNITTGLIPPVAPKTE) the chain is on the cytoplasmic side. A helical transmembrane segment spans residues 341-361 (LFATLVGNAFAIAVVGFAIAI). Over 362 to 380 (SLGKIFALRHGYRVDSNQE) the chain is Extracellular. A helical transmembrane segment spans residues 381 to 401 (LVALGLSNLIGGFFQCFPVSC). Residues 402-417 (SMSRSLVQESTGGNTQ) are Cytoplasmic-facing. A helical transmembrane segment spans residues 418-438 (VAGAVSSLFILLIIVKLGELF). At 439–485 (RDLPKAVLAAVIIVNLKGMMKQFSDICSLWKANRVDLLIWLVTFVAT) the chain is on the extracellular side. Residues 486–506 (ILLNLDIGLAVSIVFSLLLVV) form a helical membrane-spanning segment. The Cytoplasmic segment spans residues 507 to 758 (VRMQLPHYSV…PKSPVLATKL (252 aa)). Residues 531–741 (EYSGAKEVPG…ASVHDAVTFA (211 aa)) form the STAS domain. Residues 585-608 (EMKLKRMKKAKKSQKQDASSKISS) form a disordered region. Ser-751 is modified (phosphoserine).

As to quaternary structure, interacts (via C-terminal domain) with PDZK1 (via C-terminal PDZ domain); the interaction induces chloride and oxalate exchange transport. Interacts with CFTR, SLC26A3 and NHERF1. Interacts with AHCYL1; the interaction increases SLC26A6 activity. In terms of processing, N-glycosylated. Glycosylation at Asn-174 positively regulates its chloride oxalate exchanger activity. As to expression, expressed in kidney (at protein level). Expressed in spermatogenic cells. Expressed in intestine, kidney, testis, brain, muscle, heart, and stomach. Expressed in the submandibular and sublingual salivary glands. Highly expressed in stomach, kidney, heart and small intestine, low in the lung, liver, testis, brain, skeletal muscle and colon. In terms of tissue distribution, expressed in the heart.

It is found in the cell membrane. Its subcellular location is the apical cell membrane. It localises to the cytoplasmic vesicle membrane. The protein resides in the microsome. The enzyme catalyses 2 hydrogencarbonate(in) + chloride(out) = 2 hydrogencarbonate(out) + chloride(in). The catalysed reaction is oxalate(in) + chloride(out) = oxalate(out) + chloride(in). It carries out the reaction oxalate(in) + formate(out) = oxalate(out) + formate(in). It catalyses the reaction oxalate(in) + sulfate(out) = oxalate(out) + sulfate(in). The enzyme catalyses formate(in) + chloride(out) = formate(out) + chloride(in). The catalysed reaction is sulfate(in) = sulfate(out). Apical membrane chloride-bicarbonate exchange activity of the pancreatic duct is inhibited by 4,4'-diisothiocyanatostilbene-2,2'-disulfonic acid (DIDS). Oxalate secretion in the duodenum and chloride-formate exchange activity is inhibited by DIDS. Its activity is regulated as follows. Chloride-formate exchange activity and transcellular sulfate absorption is inhibited by 4,4'-diisothiocyanatostilbene-2,2'-disulfonic acid (DIDS). Functionally, apical membrane anion-exchanger with wide epithelial distribution that plays a role as a component of the pH buffering system for maintaining acid-base homeostasis. Acts as a versatile DIDS-sensitive inorganic and organic anion transporter that mediates the uptake of monovalent anions like chloride, bicarbonate, formate and hydroxyl ion and divalent anions like sulfate and oxalate. Functions in multiple exchange modes involving pairs of these anions, which include chloride-bicarbonate, chloride-oxalate, oxalate-formate, oxalate-sulfate and chloride-formate exchange. Apical membrane chloride-bicarbonate exchanger that mediates luminal chloride absorption and bicarbonate secretion by the small intestinal brush border membrane and contributes to intracellular pH regulation in the duodenal upper villous epithelium during proton-coupled peptide absorption, possibly by providing a bicarbonate import pathway. Its association with carbonic anhydrase CA2 forms a bicarbonate transport metabolon; hence maximizes the local concentration of bicarbonate at the transporter site. Also mediates intestinal chloride absorption and oxalate secretion, thereby preventing hyperoxaluria and calcium oxalate urolithiasis. Transepithelial oxalate secretion, chloride-formate, chloride-oxalate and chloride-bicarbonate transport activities in the duodenum are inhibited by PKC activation in a calcium-independent manner. The apical membrane chloride-bicarbonate exchanger also provides a major route for fluid and bicarbonate secretion into the proximal tubules of the kidney as well as into the proximal part of the interlobular pancreatic ductal tree, where it mediates electrogenic chloride-bicarbonate exchange with a chloride-bicarbonate stoichiometry of 1:2, and hence will dilute and alkalinize protein-rich acinar secretion. Also mediates the transcellular sulfate absorption and oxalate secretion across the apical membrane in the duodenum and the formate ion efflux at the apical brush border of cells in the proximal tubules of kidney. Plays a role in sperm capacitation by increasing intracellular pH. Mediates electrogenic chloride-bicarbonate exchange with a chloride-bicarbonate stoichiometry of 1:2. Also mediates exchange of chloride-formate and chloride-oxalate ions. Mediates transcellular sulfate absorption. This chain is Solute carrier family 26 member 6, found in Mus musculus (Mouse).